Consider the following 455-residue polypeptide: Probable glycine dehydrogenase (decarboxylating) subunit 1 (455 aa).

The protein belongs to the GcvP family. N-terminal subunit subfamily. As to quaternary structure, the glycine cleavage system is composed of four proteins: P, T, L and H. In this organism, the P 'protein' is a heterodimer of two subunits.

The enzyme catalyses N(6)-[(R)-lipoyl]-L-lysyl-[glycine-cleavage complex H protein] + glycine + H(+) = N(6)-[(R)-S(8)-aminomethyldihydrolipoyl]-L-lysyl-[glycine-cleavage complex H protein] + CO2. Its function is as follows. The glycine cleavage system catalyzes the degradation of glycine. The P protein binds the alpha-amino group of glycine through its pyridoxal phosphate cofactor; CO(2) is released and the remaining methylamine moiety is then transferred to the lipoamide cofactor of the H protein. This chain is Probable glycine dehydrogenase (decarboxylating) subunit 1, found in Saccharolobus islandicus (strain M.16.27) (Sulfolobus islandicus).